A 433-amino-acid polypeptide reads, in one-letter code: MQVTVETTEGLERHLTITVPAANIENAVTAELKKIAKNRRFDGFRPGKAPMKMVARMFGGSVRQDILGEVMQRHFIEAIVKEKINPAGAPTFTPVDIAEGKDLVFKASFEVFPEIVLAGLDQIAVEKPAVEVKDEDVTNMLDTLRKQQATWSDVDAAAEADSRVTIDFIGSIDGEEFEGGKAEGFALAMGQNRMIPGFEDSIVGKKAGEEFTLEVTFPEEYHAENLKGKAASFAITLHKVEAQELPELTEEFIAKFGVLDGSIEGLKTEVRKNMERELKQAVKGRIKEQVLDGLVEQNDINVPAALIDQEINVLRQQAAQRFGGDAKNTPELPRELFEEQAKRRVVVGLLIGEVIKTEELKADEDRVKAIITEMASAYEDPTEVVSYYEQNEKMMSNMRNVALEEQAIDALLAKAQVTEKEVGFNDLMNQPAA.

Residues 161-246 (DSRVTIDFIG…LHKVEAQELP (86 aa)) form the PPIase FKBP-type domain.

Belongs to the FKBP-type PPIase family. Tig subfamily.

It is found in the cytoplasm. The catalysed reaction is [protein]-peptidylproline (omega=180) = [protein]-peptidylproline (omega=0). Involved in protein export. Acts as a chaperone by maintaining the newly synthesized protein in an open conformation. Functions as a peptidyl-prolyl cis-trans isomerase. The sequence is that of Trigger factor from Photobacterium profundum (strain SS9).